A 1091-amino-acid chain; its full sequence is Isoleucine--tRNA ligase (1091 aa).

A 'HIGH' region motif is present at residues proline 48 to histidine 58. A 'KMSKS' region motif is present at residues lysine 625–alanine 629. Position 628 (lysine 628) interacts with ATP.

This sequence belongs to the class-I aminoacyl-tRNA synthetase family. IleS type 2 subfamily. Monomer. Requires Zn(2+) as cofactor.

It localises to the cytoplasm. It carries out the reaction tRNA(Ile) + L-isoleucine + ATP = L-isoleucyl-tRNA(Ile) + AMP + diphosphate. Functionally, catalyzes the attachment of isoleucine to tRNA(Ile). As IleRS can inadvertently accommodate and process structurally similar amino acids such as valine, to avoid such errors it has two additional distinct tRNA(Ile)-dependent editing activities. One activity is designated as 'pretransfer' editing and involves the hydrolysis of activated Val-AMP. The other activity is designated 'posttransfer' editing and involves deacylation of mischarged Val-tRNA(Ile). The chain is Isoleucine--tRNA ligase from Treponema pallidum (strain Nichols).